The chain runs to 359 residues: RNA 3'-terminal phosphate cyclase (359 aa).

ATP contacts are provided by residues glutamine 100 and 291–294; that span reads HASD. Residue histidine 317 is the Tele-AMP-histidine intermediate of the active site.

Belongs to the RNA 3'-terminal cyclase family. Type 1 subfamily.

The protein localises to the cytoplasm. It carries out the reaction a 3'-end 3'-phospho-ribonucleotide-RNA + ATP = a 3'-end 2',3'-cyclophospho-ribonucleotide-RNA + AMP + diphosphate. Functionally, catalyzes the conversion of 3'-phosphate to a 2',3'-cyclic phosphodiester at the end of RNA. The mechanism of action of the enzyme occurs in 3 steps: (A) adenylation of the enzyme by ATP; (B) transfer of adenylate to an RNA-N3'P to produce RNA-N3'PP5'A; (C) and attack of the adjacent 2'-hydroxyl on the 3'-phosphorus in the diester linkage to produce the cyclic end product. The biological role of this enzyme is unknown but it is likely to function in some aspects of cellular RNA processing. The sequence is that of RNA 3'-terminal phosphate cyclase from Hyperthermus butylicus (strain DSM 5456 / JCM 9403 / PLM1-5).